The sequence spans 122 residues: Large ribosomal subunit protein uL14 (122 aa).

The protein belongs to the universal ribosomal protein uL14 family. As to quaternary structure, part of the 50S ribosomal subunit. Forms a cluster with proteins L3 and L19. In the 70S ribosome, L14 and L19 interact and together make contacts with the 16S rRNA in bridges B5 and B8.

Its function is as follows. Binds to 23S rRNA. Forms part of two intersubunit bridges in the 70S ribosome. The sequence is that of Large ribosomal subunit protein uL14 from Lactococcus lactis subsp. lactis (strain IL1403) (Streptococcus lactis).